The primary structure comprises 79 residues: Cytochrome b (79 aa).

3 consecutive transmembrane segments (helical) span residues 1 to 7, 31 to 52, and 67 to 79; these read SALFLAM, WLIRYIHANGASLFFICLYLHI, and WNIGIILLFLTMA. Heme b-binding residues include H37 and H51.

This sequence belongs to the cytochrome b family. As to quaternary structure, the cytochrome bc1 complex contains 11 subunits: 3 respiratory subunits (MT-CYB, CYC1 and UQCRFS1), 2 core proteins (UQCRC1 and UQCRC2) and 6 low-molecular weight proteins (UQCRH/QCR6, UQCRB/QCR7, UQCRQ/QCR8, UQCR10/QCR9, UQCR11/QCR10 and a cleavage product of UQCRFS1). This cytochrome bc1 complex then forms a dimer. Heme b is required as a cofactor.

Its subcellular location is the mitochondrion inner membrane. Component of the ubiquinol-cytochrome c reductase complex (complex III or cytochrome b-c1 complex) that is part of the mitochondrial respiratory chain. The b-c1 complex mediates electron transfer from ubiquinol to cytochrome c. Contributes to the generation of a proton gradient across the mitochondrial membrane that is then used for ATP synthesis. This chain is Cytochrome b (MT-CYB), found in Dipodomys panamintinus (Panamint kangaroo rat).